The sequence spans 379 residues: Guanine nucleotide-binding protein G(s) subunit alpha (379 aa).

The G-alpha domain maps to 38 to 379 (STHRLLLLGA…RMHLRQYELL (342 aa)). The G1 motif stretch occupies residues 41 to 54 (RLLLLGAGESGKST). Residues 46-53 (GAGESGKS), 182-188 (LRCRVLT), 207-211 (DVGGQ), 276-279 (NKQD), and Ala351 contribute to the GTP site. Positions 53 and 188 each coordinate Mg(2+). The interval 180-188 (DILRCRVLT) is G2 motif. A G3 motif region spans residues 203 to 212 (FHMFDVGGQR). The tract at residues 272–279 (ILFLNKQD) is G4 motif. Positions 349–354 (TCAVDT) are G5 motif.

This sequence belongs to the G-alpha family. G(s) subfamily. In terms of assembly, g proteins are composed of 3 units; alpha, beta and gamma. The alpha chain contains the guanine nucleotide binding site.

Functionally, guanine nucleotide-binding proteins (G proteins) are involved as modulators or transducers in various transmembrane signaling systems. The G(s) protein is involved in hormonal regulation of adenylate cyclase: it activates the cyclase in response to beta-adrenergic stimuli. The protein is Guanine nucleotide-binding protein G(s) subunit alpha of Schistosoma mansoni (Blood fluke).